The primary structure comprises 160 residues: Eukaryotic translation initiation factor 5A (160 aa).

Basic and acidic residues predominate over residues 1-10 (MSDDDHHFES). The tract at residues 1–23 (MSDDDHHFESSADAGASKTYPQQ) is disordered. Lys52 is modified (hypusine).

The protein belongs to the eIF-5A family. Post-translationally, lys-52 undergoes hypusination, a unique post-translational modification that consists in the addition of a butylamino group from spermidine to lysine side chain, leading to the formation of the unusual amino acid hypusine. eIF-5As are the only known proteins to undergo this modification, which is essential for their function.

Functionally, translation factor that promotes translation elongation and termination, particularly upon ribosome stalling at specific amino acid sequence contexts. Binds between the exit (E) and peptidyl (P) site of the ribosome and promotes rescue of stalled ribosome: specifically required for efficient translation of polyproline-containing peptides as well as other motifs that stall the ribosome. Acts as a ribosome quality control (RQC) cofactor by joining the RQC complex to facilitate peptidyl transfer during CAT tailing step. The sequence is that of Eukaryotic translation initiation factor 5A from Dianthus caryophyllus (Carnation).